Consider the following 385-residue polypeptide: Zinc finger protein B385R (385 aa).

The C2H2-type zinc-finger motif lies at 166-190 (LQCPNCGCIQELMGTIFDETHFYNH).

Belongs to the asfivirus B385R family.

This chain is Zinc finger protein B385R, found in Ornithodoros (relapsing fever ticks).